The chain runs to 318 residues: Na(+)-translocating ferredoxin:NAD(+) oxidoreductase complex subunit D (318 aa).

The next 3 membrane-spanning stretches (helical) occupy residues 35-55 (LAVA…ICVI), 77-99 (WSAV…WWIG), and 114-134 (FGGL…FLLA). FMN phosphoryl threonine is present on Thr-156. 3 helical membrane passes run 182 to 202 (VYGC…LYLI), 206 to 226 (IISW…ALLV), and 261 to 281 (IIYA…GGYP).

It belongs to the NqrB/RnfD family. As to quaternary structure, the complex is composed of six subunits: RnfA, RnfB, RnfC, RnfD, RnfE and RnfG. FMN is required as a cofactor.

The protein localises to the cell membrane. It catalyses the reaction 2 reduced [2Fe-2S]-[ferredoxin] + Na(+)(in) + NAD(+) + H(+) = 2 oxidized [2Fe-2S]-[ferredoxin] + Na(+)(out) + NADH. Part of a membrane-bound complex that couples electron transfer with translocation of ions across the membrane. Couples electron transfer from reduced ferredoxin to NAD(+) with electrogenic movement of Na(+) out of the cell. Involved in caffeate respiration. This chain is Na(+)-translocating ferredoxin:NAD(+) oxidoreductase complex subunit D, found in Acetobacterium woodii (strain ATCC 29683 / DSM 1030 / JCM 2381 / KCTC 1655 / WB1).